A 232-amino-acid polypeptide reads, in one-letter code: Large ribosomal subunit protein uL3 (232 aa).

Belongs to the universal ribosomal protein uL3 family. As to quaternary structure, part of the 50S ribosomal subunit. Forms a cluster with proteins L14 and L19.

Its function is as follows. One of the primary rRNA binding proteins, it binds directly near the 3'-end of the 23S rRNA, where it nucleates assembly of the 50S subunit. The polypeptide is Large ribosomal subunit protein uL3 (Hydrogenobaculum sp. (strain Y04AAS1)).